Here is a 100-residue protein sequence, read N- to C-terminus: Aspartyl/glutamyl-tRNA(Asn/Gln) amidotransferase subunit C (100 aa).

It belongs to the GatC family. In terms of assembly, heterotrimer of A, B and C subunits.

The enzyme catalyses L-glutamyl-tRNA(Gln) + L-glutamine + ATP + H2O = L-glutaminyl-tRNA(Gln) + L-glutamate + ADP + phosphate + H(+). The catalysed reaction is L-aspartyl-tRNA(Asn) + L-glutamine + ATP + H2O = L-asparaginyl-tRNA(Asn) + L-glutamate + ADP + phosphate + 2 H(+). In terms of biological role, allows the formation of correctly charged Asn-tRNA(Asn) or Gln-tRNA(Gln) through the transamidation of misacylated Asp-tRNA(Asn) or Glu-tRNA(Gln) in organisms which lack either or both of asparaginyl-tRNA or glutaminyl-tRNA synthetases. The reaction takes place in the presence of glutamine and ATP through an activated phospho-Asp-tRNA(Asn) or phospho-Glu-tRNA(Gln). The chain is Aspartyl/glutamyl-tRNA(Asn/Gln) amidotransferase subunit C from Streptococcus suis (strain 98HAH33).